The chain runs to 156 residues: Ribonuclease H (156 aa).

An RNase H type-1 domain is found at 2 to 144; it reads SQFDVTVFTD…CDVLARAQAS (143 aa). The Mg(2+) site is built by Asp11, Glu49, Asp71, and Asp136.

The protein belongs to the RNase H family. As to quaternary structure, monomer. Mg(2+) serves as cofactor.

The protein localises to the cytoplasm. The enzyme catalyses Endonucleolytic cleavage to 5'-phosphomonoester.. Its function is as follows. Endonuclease that specifically degrades the RNA of RNA-DNA hybrids. This chain is Ribonuclease H, found in Nitratidesulfovibrio vulgaris (strain ATCC 29579 / DSM 644 / CCUG 34227 / NCIMB 8303 / VKM B-1760 / Hildenborough) (Desulfovibrio vulgaris).